The primary structure comprises 70 residues: Large ribosomal subunit protein bL31 (70 aa).

Positions 16, 18, 38, and 41 each coordinate Zn(2+).

Belongs to the bacterial ribosomal protein bL31 family. Type A subfamily. In terms of assembly, part of the 50S ribosomal subunit. Requires Zn(2+) as cofactor.

Binds the 23S rRNA. The polypeptide is Large ribosomal subunit protein bL31 (Bifidobacterium adolescentis (strain ATCC 15703 / DSM 20083 / NCTC 11814 / E194a)).